The following is a 293-amino-acid chain: Movement protein BC1 (293 aa).

This sequence belongs to the begomovirus movement protein BC1 family. As to quaternary structure, binds to dimeric supercoiled plasmid DNA. Post-translationally, phosphorylated.

Its subcellular location is the host cell membrane. It is found in the host microsome membrane. The protein resides in the host endoplasmic reticulum membrane. In terms of biological role, transports viral genome to neighboring plant cells directly through plasmosdesmata, without any budding. The movement protein allows efficient cell to cell propagation, by bypassing the host cell wall barrier. Begomovirus genome is shuttled out of nucleus by Nuclear shuttle protein (NSP) and the movement protein transports the DNA-NSP complex to cell plasmodesmata and facilitates further movement across the cell wall. The sequence is that of Movement protein BC1 from Cucurbita moschata (Winter crookneck squash).